The following is a 356-amino-acid chain: UDP-N-acetylglucosamine--N-acetylmuramyl-(pentapeptide) pyrophosphoryl-undecaprenol N-acetylglucosamine transferase (356 aa).

Residues 12-14 (TGG), Asn-124, Arg-163, Ser-188, Ile-242, 261-266 (ALTVCE), and Gln-287 each bind UDP-N-acetyl-alpha-D-glucosamine.

The protein belongs to the glycosyltransferase 28 family. MurG subfamily.

It is found in the cell inner membrane. It carries out the reaction di-trans,octa-cis-undecaprenyl diphospho-N-acetyl-alpha-D-muramoyl-L-alanyl-D-glutamyl-meso-2,6-diaminopimeloyl-D-alanyl-D-alanine + UDP-N-acetyl-alpha-D-glucosamine = di-trans,octa-cis-undecaprenyl diphospho-[N-acetyl-alpha-D-glucosaminyl-(1-&gt;4)]-N-acetyl-alpha-D-muramoyl-L-alanyl-D-glutamyl-meso-2,6-diaminopimeloyl-D-alanyl-D-alanine + UDP + H(+). It functions in the pathway cell wall biogenesis; peptidoglycan biosynthesis. Functionally, cell wall formation. Catalyzes the transfer of a GlcNAc subunit on undecaprenyl-pyrophosphoryl-MurNAc-pentapeptide (lipid intermediate I) to form undecaprenyl-pyrophosphoryl-MurNAc-(pentapeptide)GlcNAc (lipid intermediate II). This chain is UDP-N-acetylglucosamine--N-acetylmuramyl-(pentapeptide) pyrophosphoryl-undecaprenol N-acetylglucosamine transferase, found in Stutzerimonas stutzeri (strain A1501) (Pseudomonas stutzeri).